Consider the following 294-residue polypeptide: Large ribosomal subunit protein uL2c (294 aa).

The segment at 224–249 (VMNPVDHPHGGGGEGKSPIGRSRPVT) is disordered.

Belongs to the universal ribosomal protein uL2 family. Part of the 50S ribosomal subunit.

The protein localises to the plastid. The protein resides in the chloroplast. This Porphyra purpurea (Red seaweed) protein is Large ribosomal subunit protein uL2c (rpl2).